Consider the following 506-residue polypeptide: 5'-3' exonuclease PLD4 (506 aa).

Residues 31–51 (LQVLGALAVLWLGSVALICLL) form a helical membrane-spanning segment. Cys94 and Cys250 are joined by a disulfide. Residues Asn150 and Asn171 are each glycosylated (N-linked (GlcNAc...) asparagine). A PLD phosphodiesterase 1 domain is found at 209 to 236 (TRGVLHSKFWVVDGRHIYMGSANMDWRS). Residue His214 is the Proton donor of the active site. Active-site residues include Lys216 and Asp221. Residues Asn249, Asn281, Asn403, Asn417, and Asn427 are each glycosylated (N-linked (GlcNAc...) asparagine). Cys379 and Cys502 are oxidised to a cystine. The region spanning 423–449 (FSRVNHSKFMVTEKAAYIGTSNWSEDY) is the PLD phosphodiesterase 2 domain. His428 functions as the Nucleophile in the catalytic mechanism. Asn444 carries N-linked (GlcNAc...) asparagine glycosylation.

The protein belongs to the phospholipase D family. As to quaternary structure, homodimer. Post-translationally, highly N-glycosylated. In terms of tissue distribution, expressed in plasmacytoid dendritic cells and monocytes (at protein level).

It localises to the endoplasmic reticulum membrane. The protein resides in the golgi apparatus. Its subcellular location is the trans-Golgi network membrane. The protein localises to the nucleus. It is found in the early endosome. It localises to the cytoplasmic vesicle. The protein resides in the phagosome. Its subcellular location is the lysosome. The catalysed reaction is Exonucleolytic cleavage in the 5'- to 3'-direction to yield nucleoside 3'-phosphates.. It carries out the reaction a 5'-end 5'-dephospho-ribonucleotidyl-ribonucleotide-RNA + H2O = a ribonucleoside 3'-phosphate + a 5'-end dephospho-ribonucleoside-RNA + H(+). The enzyme catalyses a ribonucleoside 3'-phosphate-2'-3'-cyclophospho-GMP + H2O = a ribonucleoside 3'-phosphate + 2',3'-cyclophospho-GMP + H(+). It catalyses the reaction a 5'-end 5'-dephospho-2'-deoxyribonucleotidyl-2'-deoxyribonucleotide in single-stranded DNA + H2O = a 5'-end dephospho-2'-deoxyribonucleoside in single-stranded DNA + a 2'-deoxyribonucleoside 3'-phosphate + H(+). The catalysed reaction is a 5'-end 5'-phospho-2'-deoxyribonucleotide in single-stranded DNA + H2O = a 5'-end 5'-dephospho-2'-deoxyribonucleotide in single-stranded DNA + phosphate. It carries out the reaction a 3-lyso-sn-glycero-1-phospho-(3'-acyl-1'-sn-glycerol) + a 1-acyl-sn-glycerol = a 3-acyl-sn-glycero-1-phospho-(3'-acyl-1'-sn-glycerol) + glycerol. The enzyme catalyses 3-lyso-sn-glycero-1-phospho-(3'-(9Z-octadecenoyl)-1'-sn-glycerol) + 1-(9Z-octadecenoyl)-sn-glycerol = 3-(9Z-octadecenoyl)-sn-glycero-1-phospho-(3'-(9Z-octadecenoyl)-1'-sn-glycerol) + glycerol. Its activity is regulated as follows. The exonuclease activity toward ssDNA substrate is Ca(2+) and Mg(2+)-independent, but it is inhibited by Fe(2+), Cu(2+) and to a lesser extent Zn(2+) ions. In terms of biological role, 5'-&gt;3' exonuclease that hydrolyzes the phosphodiester bond of single-stranded DNA (ssDNA) and RNA molecules to form nucleoside 3'-monophosphates and 5'-end 5'-hydroxy deoxyribonucleotide/ribonucleotide fragments. Partially redundant with PLD3, can cleave all four nucleotides displaying higher efficiency for ssDNA and RNA fragments initiated with uridine and guanosine residues and lower efficiency for cytidine-initiated substrates. As a result, it does not always degrade polynucleotides to the single nucleotide level, it can stall at specific sites sparing certain fragments from exonucleolytic degradation. Processes self and pathogenic ssDNA and RNA molecules that reach the endolysosomal compartment via phagocytosis or autophagy and may serve as 'danger' signals for recognition by innate immune receptors such as toll-like receptors (TLRs). Degrades mitochondrial CpG-rich ssDNA fragments to prevent TLR9 activation and autoinflammatory response, but it can cleave viral RNA to generate ligands for TLR7 activation and initiate antiviral immune responses. In plasmacytoid dendritic cells, it cooperates with endonuclease RNASET2 to release 2',3'-cyclic guanosine monophosphate (2',3'-cGMP), a potent stimulatory ligand for TLR7. Produces 2',3'-cGMPs and cytidine-rich RNA fragments that occupy TLR7 ligand-binding pockets and trigger a signaling-competent state. Can exert polynucleotide phosphatase activity toward 5'-phosphorylated ssDNA substrates although at a slow rate. Transphosphatidylase that catalyzes the exchange with R to S stereo-inversion of the glycerol moiety between (S,R)-lysophosphatidylglycerol (LPG) and monoacylglycerol (MAG) substrates to yield (S,S)-bis(monoacylglycero)phosphate (BMP). Can synthesize a variety of (S,S)-BMPs representing the main phospholipid constituent of lysosomal intralumenal vesicle (ILV) membranes that bind acid hydrolases for lipid degradation. Regulates the homeostasis and interorganellar communication of the endolysosomal system with an overall impact on cellular removal of dysfunctional organelles via autophagy as well as proper protein and lipid turnover. May play a role in myotube formation in response to ER stress. The sequence is that of 5'-3' exonuclease PLD4 from Homo sapiens (Human).